The following is a 920-amino-acid chain: Chitin synthase C (920 aa).

2 disordered regions span residues 1–41 and 140–173; these read MSYN…NAYQ and IPML…SPAP. Residues 154 to 163 are compositionally biased toward acidic residues; that stretch reads YSDEYQVEEQ. Transmembrane regions (helical) follow at residues 466-486, 564-584, 608-628, 640-660, and 675-695; these read SAFG…FVAL, RWLN…YQIW, LFAW…TTYL, VLGV…FVLA, and MVYF…FVTV. An N-linked (GlcNAc...) asparagine glycan is attached at N715. 4 consecutive transmembrane segments (helical) span residues 718-738, 749-769, 847-867, and 892-912; these read FFTI…ASII, FIQY…YAFC, AVVL…LSAA, and VVLW…LWYL.

Belongs to the chitin synthase family. Class I subfamily.

It is found in the cell membrane. The enzyme catalyses [(1-&gt;4)-N-acetyl-beta-D-glucosaminyl](n) + UDP-N-acetyl-alpha-D-glucosamine = [(1-&gt;4)-N-acetyl-beta-D-glucosaminyl](n+1) + UDP + H(+). In terms of biological role, polymerizes chitin, a structural polymer of the cell wall and septum, by transferring the sugar moiety of UDP-GlcNAc to the non-reducing end of the growing chitin polymer. Involved in hyphal growth. The polypeptide is Chitin synthase C (Aspergillus oryzae (strain ATCC 42149 / RIB 40) (Yellow koji mold)).